The chain runs to 187 residues: Frequenin-1 (187 aa).

Gly2 carries N-myristoyl glycine lipidation. EF-hand domains follow at residues 24-59 (EKEIRQWHKGFLKDCPNGLLTEQGFIKIYKQFFPQG), 60-95 (DPSKFASLVFRVFDENNDGSIEFEEFIRALSVTSKG), 96-131 (NLDEKLQWAFRLYDVDNDGYITREEMYNIVDAIYQM), and 143-178 (TPQKRVDKIFDQMDKNHDGKLTLEEFREGSKADPRI). Positions 73, 75, 77, 79, 84, 109, 111, 113, 115, 120, 156, 158, 160, 162, and 167 each coordinate Ca(2+).

It belongs to the recoverin family. As to quaternary structure, in contrast to Frq2, does not interact with ric8a. Enriched in synapses, such as the motor nerve endings at neuromuscular junctions. In the embryo, highly expressed in the ventral ganglia.

The protein resides in the cytoplasm. Its function is as follows. Ca(2+)-dependent modulation of synaptic efficacy. Also plays a role in axon terminal morphology. This Drosophila melanogaster (Fruit fly) protein is Frequenin-1 (Frq1).